The sequence spans 553 residues: Putative transport protein YidE (553 aa).

5 consecutive transmembrane segments (helical) span residues 4 to 24, 28 to 48, 65 to 85, 95 to 115, and 158 to 178; these read IALT…IGNV, GIGL…HFVS, FGLI…FFAS, LFAV…HKLF, and MSYA…MWML. RCK C-terminal domains follow at residues 191–276 and 279–361; these read QQHE…VIGQ and DTSL…VLGN. 6 helical membrane passes run 371-391, 393-413, 439-459, 464-484, 493-513, and 533-553; these read MLPV…PVFV, GFPA…ALIL, IVLF…NTLV, LSWI…VGIL, YLTM…LAFA, and LVMF…WSIG.

It belongs to the AAE transporter (TC 2.A.81) family. YidE subfamily.

The protein resides in the cell membrane. This chain is Putative transport protein YidE, found in Escherichia coli O7:K1 (strain IAI39 / ExPEC).